Here is a 148-residue protein sequence, read N- to C-terminus: UPF0251 protein Cbei_2962 (148 aa).

The protein belongs to the UPF0251 family.

The protein is UPF0251 protein Cbei_2962 of Clostridium beijerinckii (strain ATCC 51743 / NCIMB 8052) (Clostridium acetobutylicum).